Here is a 204-residue protein sequence, read N- to C-terminus: Large ribosomal subunit protein eL15 (204 aa).

This sequence belongs to the eukaryotic ribosomal protein eL15 family. Component of the large ribosomal subunit.

It localises to the cytoplasm. Component of the large ribosomal subunit. The ribosome is a large ribonucleoprotein complex responsible for the synthesis of proteins in the cell. This is Large ribosomal subunit protein eL15 (rpl15) from Silurus meridionalis (Southern catfish).